The primary structure comprises 197 residues: dITP/XTP pyrophosphatase (197 aa).

Residue 8-13 (TGNPGK) participates in substrate binding. Mg(2+)-binding residues include Glu-40 and Asp-69. Asp-69 functions as the Proton acceptor in the catalytic mechanism. Residues Ser-70, 154 to 157 (FGYD), Lys-177, and 182 to 183 (HR) contribute to the substrate site.

It belongs to the HAM1 NTPase family. Homodimer. The cofactor is Mg(2+).

The enzyme catalyses XTP + H2O = XMP + diphosphate + H(+). It catalyses the reaction dITP + H2O = dIMP + diphosphate + H(+). It carries out the reaction ITP + H2O = IMP + diphosphate + H(+). Pyrophosphatase that catalyzes the hydrolysis of nucleoside triphosphates to their monophosphate derivatives, with a high preference for the non-canonical purine nucleotides XTP (xanthosine triphosphate), dITP (deoxyinosine triphosphate) and ITP. Seems to function as a house-cleaning enzyme that removes non-canonical purine nucleotides from the nucleotide pool, thus preventing their incorporation into DNA/RNA and avoiding chromosomal lesions. The polypeptide is dITP/XTP pyrophosphatase (Yersinia pseudotuberculosis serotype I (strain IP32953)).